The chain runs to 98 residues: Large ribosomal subunit protein uL23 (98 aa).

The protein belongs to the universal ribosomal protein uL23 family. In terms of assembly, part of the 50S ribosomal subunit. Contacts protein L29, and trigger factor when it is bound to the ribosome.

Its function is as follows. One of the early assembly proteins it binds 23S rRNA. One of the proteins that surrounds the polypeptide exit tunnel on the outside of the ribosome. Forms the main docking site for trigger factor binding to the ribosome. In Teredinibacter turnerae (strain ATCC 39867 / T7901), this protein is Large ribosomal subunit protein uL23.